The primary structure comprises 629 residues: MAQVQLQGQTPNGSTAAVTSAPATSGGATATQFGNTSLYVGDLDFNVTDSQLFDAFGQMGTVVTVRVCRDLVTRRSLGYGYVNFTNPQDAARAIQELNYIPLYGKPIRVMYSHRDPSVRRSGAGNIFIKNLDESIDHKALHDTFSSFGNIVSCKVAVDSSGQSKGYGFVQYANEESAQKAIEKLNGMLLNDKQVYVGPFLRRQERDSTANKTKFTNVYVKNLAESTTDDDLKNAFGEYGKITSAVVMKDGEGKSKGFGFVNFENADDAARAVESLNGHKFDDKEWYVGRAQKKSERETELRVRYEQNLKEAADKFQSSNLYVKNLDPSISDEKLKEIFSPFGTVTSSKVMRDPNGTSKGSGFVAFATPEEATEAMSQLSGKMIESKPLYVAIAQRKEDRRVRLQAQFSQVRPVAMQPSVGPRMPVYPPGGPGIGQQMFYGQAPPAMIPPQPGYGYQQQLVPGMRPGGGPVPSFFMPMVQPQQQRPGGGRRPGGIQHSQQQNPMMQQQMHPRGRMFRYPQGRGGSGDVPPYDMGNNMPLTIGALASNLSNATPEQQRTMLGEVLYPLVEQVEAESAAKVTGMLLEMDQTEVLHLLESPEALKAKVAEAMDVLRSVAAGGATEQLASLNLS.

A compositionally biased stretch (polar residues) spans 1 to 12; that stretch reads MAQVQLQGQTPN. Residues 1-25 form a disordered region; it reads MAQVQLQGQTPNGSTAAVTSAPATS. The span at 13–25 shows a compositional bias: low complexity; sequence GSTAAVTSAPATS. 4 RRM domains span residues 36 to 114, 124 to 201, 215 to 292, and 318 to 395; these read TSLY…YSHR, GNIF…PFLR, TNVY…RAQK, and SNLY…IAQR. The interval 480-507 is disordered; it reads PQQQRPGGGRRPGGIQHSQQQNPMMQQQ. Residues 492–507 are compositionally biased toward low complexity; it reads GGIQHSQQQNPMMQQQ. The 78-residue stretch at 539 to 616 folds into the PABC domain; the sequence is TIGALASNLS…AMDVLRSVAA (78 aa).

The protein belongs to the polyadenylate-binding protein type-1 family. As to quaternary structure, interacts with eIF-iso4G. Interacts with ERD15/CID1 and CID7. Interacts with Turnip mosaic virus (TuMV) VPg-Pro and RNA-dependent RNA polymerase (RdRp). As to expression, expressed in all organs (at the protein level) but under distinct spatial and temporal regulation within each organ.

It localises to the cytoplasm. Its subcellular location is the nucleus. Functionally, binds the poly(A) tail of mRNA. Appears to be an important mediator of the multiple roles of the poly(A) tail in mRNA biogenesis, stability and translation. In the cytoplasm, affects both translation and mRNA decay. Stimulates translation by interaction with translation initiation factor eIF4G, a subunit of the cap-binding complex eIF4F, bringing the 5'- and 3'-ends of the mRNA in proximity. The formation of this circular mRNP structure appears to be critical for the synergistic effects of the cap and the poly(A) tail in facilitating translation initiation, recycling of ribosomes, and mRNA stability. During infection with potyvirus TuMV, acts as a potential integral component of the viral replicase complex that could play an important role in the regulation of potyviral RNA-dependent RNA polymerase (RdRp). Binds to uridylated mRNAs and determines the size of uridine extensions. Limits uridine extension by URT1, likely by binding to the oligo(A) tail and preventing URT1 access. This chain is Polyadenylate-binding protein 2 (PAB2), found in Arabidopsis thaliana (Mouse-ear cress).